The sequence spans 624 residues: Vitamin B12 transporter BtuB (624 aa).

Residues 1-21 (MTIKKYTLLTALSVTAFSGWA) form the signal peptide. Residues 31–38 (NEMVVTAN) carry the TonB box motif. The TBDR plug domain maps to 43 to 157 (PKSSVLAPVD…IGGVVNIITE (115 aa)). Cyanocob(III)alamin is bound by residues leucine 88, serine 90, asparagine 97, and 115 to 116 (IS). Residues 160 to 624 (TLGSTLTAGL…EYYFTGSYNF (465 aa)) enclose the TBDR beta-barrel domain. A run of 3 beta stranded transmembrane segments spans residues 163–170 (STLTAGLG), 174–183 (YQNYNGSTQQ), and 189–200 (TTITLAGNYDYS). Aspartate 204, glutamine 216, aspartate 218, and aspartate 220 together coordinate Ca(2+). Beta stranded transmembrane passes span 222 to 232 (YLGKMLWLGAN) and 237 to 253 (EQFS…NRSD). Tyrosine 254, aspartate 255, and aspartate 266 together coordinate Ca(2+). Transmembrane regions (beta stranded) follow at residues 268 to 282 (RSLS…INFS), 284 to 301 (GGYA…QDYN), 314 to 330 (TLDD…NTYQ), 333 to 342 (LGNVGGGLDW), 358 to 374 (YEQR…QFVG), 376 to 386 (VTLEGAIRGDD), 390 to 405 (FGWH…WEFV), 408 to 422 (YRLI…KAPN), 440 to 449 (ESTQWEAAIT), 455 to 464 (LDWRLSAYRN), 481 to 498 (YYNV…TGSF), 502 to 517 (PLSH…PRNA), 525 to 537 (RRAK…QLDW), 543 to 557 (DWSV…RYDS), 568 to 582 (PVKL…LAVS), 595 to 606 (IANLFDKDYEMV), and 612 to 624 (PGRE…SYNF). Threonine 314 contacts cyanocob(III)alamin. Arginine 525 is a binding site for cyanocob(III)alamin. Residues 607-624 (YGYQTPGREYYFTGSYNF) carry the TonB C-terminal box motif.

It belongs to the TonB-dependent receptor family. BtuB (TC 1.B.14.3.1) subfamily.

It is found in the cell outer membrane. In terms of biological role, involved in the active translocation of vitamin B12 (cyanocobalamin) across the outer membrane to the periplasmic space. It derives its energy for transport by interacting with the trans-periplasmic membrane protein TonB. This chain is Vitamin B12 transporter BtuB, found in Yersinia pseudotuberculosis serotype O:1b (strain IP 31758).